A 362-amino-acid polypeptide reads, in one-letter code: Heat-inducible transcription repressor HrcA (362 aa).

The protein belongs to the HrcA family.

Negative regulator of class I heat shock genes (grpE-dnaK-dnaJ and groELS operons). Prevents heat-shock induction of these operons. In Rhizobium johnstonii (strain DSM 114642 / LMG 32736 / 3841) (Rhizobium leguminosarum bv. viciae), this protein is Heat-inducible transcription repressor HrcA.